The primary structure comprises 497 residues: Inactive metallocarboxypeptidase ecm14 (497 aa).

The first 28 residues, 1–28, serve as a signal peptide directing secretion; it reads MAYNKSLKSLVFILLASQIVFVLFLCYG. A propeptide spanning residues 29-148 is cleaved from the precursor; the sequence is KSSRELGVKW…TLFESIVPDT (120 aa). In terms of domain architecture, Peptidase M14 spans 182–492; sequence SYQNLESINS…AMILYYGEFI (311 aa). 2 residues coordinate Zn(2+): histidine 248 and glutamate 251. Substrate-binding positions include 248 to 251 and 323 to 324; these read HARE and DA. A disulfide bridge links cysteine 317 with cysteine 337. Zn(2+) is bound at residue histidine 377. 378 to 379 is a substrate binding site; the sequence is SY.

This sequence belongs to the peptidase M14 family. Zn(2+) serves as cofactor.

The protein localises to the endoplasmic reticulum. The protein resides in the secreted. Functionally, inactive carboxypeptidase that may play a role in cell wall organization and biogenesis. This Schizosaccharomyces pombe (strain 972 / ATCC 24843) (Fission yeast) protein is Inactive metallocarboxypeptidase ecm14.